The primary structure comprises 99 residues: IEIKLGGDDGALAFVPGSFTVAAGEKIVFKNNAGFPHNIVFDEDEVPAGVDASKISMSEEDLLNAPGETYAVTLSEKGTYSFYCSPHQGAGMVGKVTVQ.

The Plastocyanin-like domain occupies 1-99 (IEIKLGGDDG…AGMVGKVTVQ (99 aa)). Residues H37, C84, H87, and M92 each coordinate Cu cation.

Belongs to the plastocyanin family. The cofactor is Cu(2+).

The protein localises to the plastid. Its subcellular location is the chloroplast thylakoid membrane. Participates in electron transfer between P700 and the cytochrome b6-f complex in photosystem I. This chain is Plastocyanin (PETE), found in Rumex obtusifolius (Bitter dock).